The following is a 284-amino-acid chain: 4-hydroxybenzoate octaprenyltransferase (284 aa).

8 helical membrane passes run 16–36 (PIGI…ASDG), 40–60 (WTLV…GCAV), 91–111 (LLVA…LNTL), 132–152 (FFAI…PMGF), 157–177 (NTVP…SVAY), 207–227 (AIIM…GWQF), 231–251 (IWFV…YTLI), and 259–279 (CFAA…GVAL).

It belongs to the UbiA prenyltransferase family. Requires Mg(2+) as cofactor.

The protein localises to the cell inner membrane. The catalysed reaction is all-trans-octaprenyl diphosphate + 4-hydroxybenzoate = 4-hydroxy-3-(all-trans-octaprenyl)benzoate + diphosphate. It participates in cofactor biosynthesis; ubiquinone biosynthesis. Its function is as follows. Catalyzes the prenylation of para-hydroxybenzoate (PHB) with an all-trans polyprenyl group. Mediates the second step in the final reaction sequence of ubiquinone-8 (UQ-8) biosynthesis, which is the condensation of the polyisoprenoid side chain with PHB, generating the first membrane-bound Q intermediate 3-octaprenyl-4-hydroxybenzoate. In Janthinobacterium sp. (strain Marseille) (Minibacterium massiliensis), this protein is 4-hydroxybenzoate octaprenyltransferase.